Consider the following 548-residue polypeptide: 1,3-beta-glucanosyltransferase gel4 (548 aa).

The signal sequence occupies residues 1 to 25 (MKFVYAAAGASLVGSALATLPVIEA). N-linked (GlcNAc...) asparagine glycosylation is found at Asn-51 and Asn-69. The cysteines at positions 88 and 117 are disulfide-linked. Residues Tyr-106, 133–141 (SAPSESINR), Asn-174, and Glu-175 contribute to the (1,3-beta-D-glucosyl)n site. Catalysis depends on Glu-175, which acts as the Proton donor. An N-linked (GlcNAc...) asparagine glycan is attached at Asn-181. (1,3-beta-D-glucosyl)n contacts are provided by Asp-217 and Arg-222. 5 disulfide bridges follow: Cys-231–Cys-364, Cys-249–Cys-280, Cys-386–Cys-437, Cys-395–Cys-461, and Cys-414–Cys-419. The active-site Nucleophile is Glu-277. Position 309 (Tyr-309) interacts with (1,3-beta-D-glucosyl)n. Asn-425 carries an N-linked (GlcNAc...) asparagine glycan. Residue Ala-519 is the site of GPI-like-anchor amidated alanine attachment. Residues 520-548 (SPMAVKVGNWQFGAYIATALFAGVGMLVL) constitute a propeptide, removed in mature form.

The protein belongs to the glycosyl hydrolase 72 family. The GPI-like anchor contains a phosphoceramide lipid group.

It localises to the cell membrane. Splits internally a 1,3-beta-glucan molecule and transfers the newly generated reducing end (the donor) to the non-reducing end of another 1,3-beta-glucan molecule (the acceptor) forming a 1,3-beta linkage, resulting in the elongation of 1,3-beta-glucan chains in the cell wall. Involved in cell wall morphogenesis. The sequence is that of 1,3-beta-glucanosyltransferase gel4 (gel4) from Aspergillus fumigatus (strain ATCC MYA-4609 / CBS 101355 / FGSC A1100 / Af293) (Neosartorya fumigata).